Consider the following 420-residue polypeptide: 3-isopropylmalate dehydratase large subunit (420 aa).

Cys300, Cys360, and Cys363 together coordinate [4Fe-4S] cluster.

The protein belongs to the aconitase/IPM isomerase family. LeuC type 2 subfamily. As to quaternary structure, heterodimer of LeuC and LeuD. [4Fe-4S] cluster serves as cofactor.

The catalysed reaction is (2R,3S)-3-isopropylmalate = (2S)-2-isopropylmalate. The protein operates within amino-acid biosynthesis; L-leucine biosynthesis; L-leucine from 3-methyl-2-oxobutanoate: step 2/4. Catalyzes the isomerization between 2-isopropylmalate and 3-isopropylmalate, via the formation of 2-isopropylmaleate. This chain is 3-isopropylmalate dehydratase large subunit, found in Syntrophus aciditrophicus (strain SB).